The following is a 276-amino-acid chain: Pantothenate synthetase (276 aa).

27 to 34 contacts ATP; sequence MGALHKGH. His-34 acts as the Proton donor in catalysis. Gln-58 contacts (R)-pantoate. Gln-58 lines the beta-alanine pocket. 147–150 serves as a coordination point for ATP; sequence GKKD. Position 153 (Gln-153) interacts with (R)-pantoate. Residues Val-176 and 184–187 each bind ATP; that span reads LSSR.

Belongs to the pantothenate synthetase family. In terms of assembly, homodimer.

It localises to the cytoplasm. The enzyme catalyses (R)-pantoate + beta-alanine + ATP = (R)-pantothenate + AMP + diphosphate + H(+). It functions in the pathway cofactor biosynthesis; (R)-pantothenate biosynthesis; (R)-pantothenate from (R)-pantoate and beta-alanine: step 1/1. Catalyzes the condensation of pantoate with beta-alanine in an ATP-dependent reaction via a pantoyl-adenylate intermediate. In Helicobacter pylori (strain Shi470), this protein is Pantothenate synthetase.